The primary structure comprises 526 residues: Probable lipid II flippase MurJ (526 aa).

Helical transmembrane passes span 35-55, 58-78, 96-116, 137-157, 160-180, 190-210, 235-255, 281-301, 313-333, 362-382, 391-411, 415-435, 459-479, and 489-509; these read LMGT…PNLF, LFAE…HYSM, AIFT…ILGA, MFPY…LHSI, FVPS…SMYF, IAAA…QLIF, IIAL…NDLV, LLGI…SFHV, LITA…FVLF, WHSV…AFYA, IAGT…FIPL, GIAF…WMFL, LFSV…AYFF, and GVPL…LLLL.

Belongs to the MurJ/MviN family.

It localises to the cell inner membrane. It participates in cell wall biogenesis; peptidoglycan biosynthesis. Involved in peptidoglycan biosynthesis. Transports lipid-linked peptidoglycan precursors from the inner to the outer leaflet of the cytoplasmic membrane. This is Probable lipid II flippase MurJ from Treponema pallidum (strain Nichols).